The primary structure comprises 518 residues: Glutamate--cysteine ligase (518 aa).

The protein belongs to the glutamate--cysteine ligase type 1 family. Type 1 subfamily.

It catalyses the reaction L-cysteine + L-glutamate + ATP = gamma-L-glutamyl-L-cysteine + ADP + phosphate + H(+). It functions in the pathway sulfur metabolism; glutathione biosynthesis; glutathione from L-cysteine and L-glutamate: step 1/2. The sequence is that of Glutamate--cysteine ligase from Escherichia coli O157:H7.